Here is a 374-residue protein sequence, read N- to C-terminus: F-box/kelch-repeat protein At2g24250 (374 aa).

An F-box domain is found at 14–63; the sequence is PDWSQLPEELLHIISTHLEDHYFDAVHARSVCRSWRSTFPFPSSLLRQSY. Kelch repeat units lie at residues 100–150 and 249–301; these read SEYF…PLGH and NFLV…LGNF.

This is F-box/kelch-repeat protein At2g24250 from Arabidopsis thaliana (Mouse-ear cress).